The chain runs to 396 residues: Elongation factor Tu (396 aa).

One can recognise a tr-type G domain in the interval 10–205; the sequence is KPHVNIGTIG…AVDESIPDPV (196 aa). Positions 19-26 are G1; sequence GHVDHGKT. 19–26 provides a ligand contact to GTP; it reads GHVDHGKT. Residue T26 participates in Mg(2+) binding. Residues 62-66 form a G2 region; the sequence is GITIN. The segment at 83 to 86 is G3; sequence DAPG. Residues 83–87 and 138–141 contribute to the GTP site; these read DAPGH and NKAD. Positions 138–141 are G4; sequence NKAD. A G5 region spans residues 175 to 177; the sequence is SAL.

This sequence belongs to the TRAFAC class translation factor GTPase superfamily. Classic translation factor GTPase family. EF-Tu/EF-1A subfamily. As to quaternary structure, monomer.

Its subcellular location is the cytoplasm. It catalyses the reaction GTP + H2O = GDP + phosphate + H(+). GTP hydrolase that promotes the GTP-dependent binding of aminoacyl-tRNA to the A-site of ribosomes during protein biosynthesis. The sequence is that of Elongation factor Tu from Mycobacterium bovis (strain ATCC BAA-935 / AF2122/97).